We begin with the raw amino-acid sequence, 333 residues long: MAKIYYDEDASLGILAMKTVAIVGYGSQGHAHALNLRDSGIRVIVALDDKSPHRKTAMEDGFSVYTTSRATQEADVIMILTPDTVQPAVYKECIEPNLTPGKAIAFAHGFNIHFGQIVPPKDIDVFMVAPKGPGHLVRWMYEEGKGVPALISIHQDATGSCRDIALAYAKGIGATRAGVIETTFREETETDLFGEQAVLCGGATALIKAGFETLVEAGYQPEMAYFECLHELKLIVDLIYQHGIAGMRYSISDTAKYGDVTRGDRVYEAVKPLMKQMLKEIQDGEFAREWILENQANRPVYNALLNKDKEHLVEKVGKELRQMMPWLSGKELK.

The region spanning 2-182 (AKIYYDEDAS…GATRAGVIET (181 aa)) is the KARI N-terminal Rossmann domain. NADP(+)-binding positions include 25–28 (YGSQ), S51, and 83–86 (DTVQ). The active site involves H108. Position 134 (G134) interacts with NADP(+). In terms of domain architecture, KARI C-terminal knotted spans 183–327 (TFREETETDL…KELRQMMPWL (145 aa)). D191, E195, E227, and E231 together coordinate Mg(2+). S252 lines the substrate pocket.

It belongs to the ketol-acid reductoisomerase family. Requires Mg(2+) as cofactor.

It carries out the reaction (2R)-2,3-dihydroxy-3-methylbutanoate + NAD(+) = (2S)-2-acetolactate + NADH + H(+). It catalyses the reaction (2R)-2,3-dihydroxy-3-methylbutanoate + NADP(+) = (2S)-2-acetolactate + NADPH + H(+). It functions in the pathway amino-acid biosynthesis; L-isoleucine biosynthesis; L-isoleucine from 2-oxobutanoate: step 2/4. Its pathway is amino-acid biosynthesis; L-valine biosynthesis; L-valine from pyruvate: step 2/4. Involved in the biosynthesis of branched-chain amino acids (BCAA). Catalyzes an alkyl-migration followed by a ketol-acid reduction of (S)-2-acetolactate (S2AL) to yield (R)-2,3-dihydroxy-isovalerate. In the isomerase reaction, S2AL is rearranged via a Mg-dependent methyl migration to produce 3-hydroxy-3-methyl-2-ketobutyrate (HMKB). In the reductase reaction, this 2-ketoacid undergoes a metal-dependent reduction by NADPH or NADH to yield (R)-2,3-dihydroxy-isovalerate. This Hydrogenobaculum sp. (strain Y04AAS1) protein is Ketol-acid reductoisomerase (NAD(P)(+)).